The primary structure comprises 231 residues: 2-C-methyl-D-erythritol 4-phosphate cytidylyltransferase (231 aa).

This sequence belongs to the IspD/TarI cytidylyltransferase family. IspD subfamily.

The catalysed reaction is 2-C-methyl-D-erythritol 4-phosphate + CTP + H(+) = 4-CDP-2-C-methyl-D-erythritol + diphosphate. Its pathway is isoprenoid biosynthesis; isopentenyl diphosphate biosynthesis via DXP pathway; isopentenyl diphosphate from 1-deoxy-D-xylulose 5-phosphate: step 2/6. Catalyzes the formation of 4-diphosphocytidyl-2-C-methyl-D-erythritol from CTP and 2-C-methyl-D-erythritol 4-phosphate (MEP). This chain is 2-C-methyl-D-erythritol 4-phosphate cytidylyltransferase, found in Shewanella piezotolerans (strain WP3 / JCM 13877).